Consider the following 211-residue polypeptide: uncharacterized protein (211 aa).

Belongs to the A.longa ORF167/ORF288 family.

It localises to the plastid. This is an uncharacterized protein from Euglena longa (Euglenophycean alga).